The following is a 187-amino-acid chain: Elongation factor P (187 aa).

It belongs to the elongation factor P family.

It localises to the cytoplasm. It participates in protein biosynthesis; polypeptide chain elongation. Involved in peptide bond synthesis. Stimulates efficient translation and peptide-bond synthesis on native or reconstituted 70S ribosomes in vitro. Probably functions indirectly by altering the affinity of the ribosome for aminoacyl-tRNA, thus increasing their reactivity as acceptors for peptidyl transferase. This Mycobacterium sp. (strain JLS) protein is Elongation factor P.